The chain runs to 181 residues: Ferredoxin C 2, chloroplastic (181 aa).

Residues 1–44 constitute a chloroplast transit peptide; the sequence is MALILPCTFCTSLQKKNFPINRRYITNFRRGATTATCEFRIPVE. Residues 59 to 151 enclose the 2Fe-2S ferredoxin-type domain; sequence HKVTVHDRQR…DLEVETQDED (93 aa). [2Fe-2S] cluster is bound by residues Cys-97, Cys-102, Cys-105, and Cys-135.

This sequence belongs to the 2Fe2S plant-type ferredoxin family. [2Fe-2S] cluster is required as a cofactor.

The protein resides in the plastid. The protein localises to the chloroplast. Ferredoxins are iron-sulfur proteins that transfer electrons in a wide variety of metabolic reactions. Mediates alternative electron partitioning in conditions of acceptor limitation at photosystem I. The chain is Ferredoxin C 2, chloroplastic from Arabidopsis thaliana (Mouse-ear cress).